Here is an 88-residue protein sequence, read N- to C-terminus: Ribonuclease P protein component 1 (88 aa).

It belongs to the eukaryotic/archaeal RNase P protein component 1 family. Consists of a catalytic RNA component and at least 4-5 protein subunits.

Its subcellular location is the cytoplasm. The enzyme catalyses Endonucleolytic cleavage of RNA, removing 5'-extranucleotides from tRNA precursor.. Its function is as follows. Part of ribonuclease P, a protein complex that generates mature tRNA molecules by cleaving their 5'-ends. The sequence is that of Ribonuclease P protein component 1 from Nitrosopumilus maritimus (strain SCM1).